A 39-amino-acid polypeptide reads, in one-letter code: Omega-theraphotoxin-Ba1b (39 aa).

Cystine bridges form between C4/C17, C8/C31, and C25/C36.

Belongs to the neurotoxin 12 (Hwtx-2) family. 06 (TXP1) subfamily. As to expression, expressed by the venom gland.

The protein resides in the secreted. Functionally, inhibits voltage-gated calcium channels (Cav) in rat cerebellar granule cells. Has insecticidal activity to crickets (Acheta domesticus). Is not toxic to mice. In Brachypelma albiceps (Mexican golden redrump tarantula), this protein is Omega-theraphotoxin-Ba1b.